The primary structure comprises 272 residues: ATP phosphoribosyltransferase regulatory subunit (272 aa).

This sequence belongs to the class-II aminoacyl-tRNA synthetase family. HisZ subfamily. Heteromultimer composed of HisG and HisZ subunits.

It is found in the cytoplasm. It functions in the pathway amino-acid biosynthesis; L-histidine biosynthesis; L-histidine from 5-phospho-alpha-D-ribose 1-diphosphate: step 1/9. In terms of biological role, required for the first step of histidine biosynthesis. May allow the feedback regulation of ATP phosphoribosyltransferase activity by histidine. The polypeptide is ATP phosphoribosyltransferase regulatory subunit (Staphylococcus aureus (strain Mu3 / ATCC 700698)).